Reading from the N-terminus, the 1023-residue chain is Presequence protease, mitochondrial (1023 aa).

A mitochondrion-targeting transit peptide spans 1–62; the sequence is MFRQSKTIIT…PDLFLTAVKL (62 aa). His-99 contacts Zn(2+). Glu-102 acts as the Proton acceptor in catalysis. Zn(2+)-binding residues include His-103 and Glu-200. Residues Cys-114 and Cys-551 are joined by a disulfide bond.

Belongs to the peptidase M16 family. PreP subfamily. Monomer and homodimer; homodimerization is induced by binding of the substrate. The cofactor is Zn(2+). Post-translationally, a disulfide bond locks the enzyme in the closed conformation preventing substrate entry into the catalytic chamber.

It is found in the mitochondrion matrix. Its activity is regulated as follows. Mainly exists in a closed and catalytically competent conformation but a closed-to-open switch allows substrate entry into the catalytic chamber. Substrate binding induces closure and dimerization. A disulfide bond may lock the enzyme in a closed conformation preventing substrate entry into the catalytic chamber, participating in redox regulation of the enzyme. Inhibited by metal-chelating agents. Inhibited by nickel and zinc excess, and slightly activated by manganese. Functionally, metalloendopeptidase of the mitochondrial matrix that functions in peptide cleavage and degradation rather than in protein processing. Has an ATP-independent activity. Specifically cleaves peptides in the range of 5 to 65 residues. Shows a preference for cleavage after small polar residues and before basic residues, but without any positional preference. Degrades the transit peptides of mitochondrial proteins after their cleavage. Also degrades other unstructured peptides. In Danio rerio (Zebrafish), this protein is Presequence protease, mitochondrial (pitrm1).